The following is a 493-amino-acid chain: Glutamate--tRNA ligase (493 aa).

A 'HIGH' region motif is present at residues Pro10–Thr20. The 'KMSKS' region signature appears at Lys251 to Arg255. Position 254 (Lys254) interacts with ATP.

It belongs to the class-I aminoacyl-tRNA synthetase family. Glutamate--tRNA ligase type 1 subfamily. In terms of assembly, monomer.

It localises to the cytoplasm. The catalysed reaction is tRNA(Glu) + L-glutamate + ATP = L-glutamyl-tRNA(Glu) + AMP + diphosphate. Its function is as follows. Catalyzes the attachment of glutamate to tRNA(Glu) in a two-step reaction: glutamate is first activated by ATP to form Glu-AMP and then transferred to the acceptor end of tRNA(Glu). In Pseudomonas fluorescens (strain Pf0-1), this protein is Glutamate--tRNA ligase.